We begin with the raw amino-acid sequence, 313 residues long: 4-hydroxy-3-methylbut-2-enyl diphosphate reductase (313 aa).

Cysteine 12 lines the [4Fe-4S] cluster pocket. The (2E)-4-hydroxy-3-methylbut-2-enyl diphosphate site is built by histidine 41 and histidine 74. The dimethylallyl diphosphate site is built by histidine 41 and histidine 74. Isopentenyl diphosphate is bound by residues histidine 41 and histidine 74. Residue cysteine 96 participates in [4Fe-4S] cluster binding. Histidine 124 provides a ligand contact to (2E)-4-hydroxy-3-methylbut-2-enyl diphosphate. Residue histidine 124 coordinates dimethylallyl diphosphate. Histidine 124 is an isopentenyl diphosphate binding site. The Proton donor role is filled by glutamate 126. Threonine 164 lines the (2E)-4-hydroxy-3-methylbut-2-enyl diphosphate pocket. Cysteine 194 lines the [4Fe-4S] cluster pocket. (2E)-4-hydroxy-3-methylbut-2-enyl diphosphate is bound by residues serine 222, serine 223, asparagine 224, and serine 266. Dimethylallyl diphosphate contacts are provided by serine 222, serine 223, asparagine 224, and serine 266. Isopentenyl diphosphate-binding residues include serine 222, serine 223, asparagine 224, and serine 266.

This sequence belongs to the IspH family. [4Fe-4S] cluster is required as a cofactor.

It carries out the reaction isopentenyl diphosphate + 2 oxidized [2Fe-2S]-[ferredoxin] + H2O = (2E)-4-hydroxy-3-methylbut-2-enyl diphosphate + 2 reduced [2Fe-2S]-[ferredoxin] + 2 H(+). The catalysed reaction is dimethylallyl diphosphate + 2 oxidized [2Fe-2S]-[ferredoxin] + H2O = (2E)-4-hydroxy-3-methylbut-2-enyl diphosphate + 2 reduced [2Fe-2S]-[ferredoxin] + 2 H(+). It participates in isoprenoid biosynthesis; dimethylallyl diphosphate biosynthesis; dimethylallyl diphosphate from (2E)-4-hydroxy-3-methylbutenyl diphosphate: step 1/1. It functions in the pathway isoprenoid biosynthesis; isopentenyl diphosphate biosynthesis via DXP pathway; isopentenyl diphosphate from 1-deoxy-D-xylulose 5-phosphate: step 6/6. Functionally, catalyzes the conversion of 1-hydroxy-2-methyl-2-(E)-butenyl 4-diphosphate (HMBPP) into a mixture of isopentenyl diphosphate (IPP) and dimethylallyl diphosphate (DMAPP). Acts in the terminal step of the DOXP/MEP pathway for isoprenoid precursor biosynthesis. The protein is 4-hydroxy-3-methylbut-2-enyl diphosphate reductase of Protochlamydia amoebophila (strain UWE25).